Here is a 320-residue protein sequence, read N- to C-terminus: MSSAPASGGLRLLVCFLGVFVCYFYYGILQETITRRTYGEGEKQEKFRFALSLVFVQCIVNALFAKLLIQCFDSGKTDRTQSWLYSACSLSYLGAMVSSNSALQFVNYPTQVLGKSCKPIPVMLLGVTLLRKKYPLTKYLCVLLIVFGVALFMYKPKTGSGDGDHTVGYGELLLLLSLTLDGLTGVSQDYMRAHFQTGSNHMMLSINLWSSLFLGAGIVLTGELWDFLSFTERYPSIVYNIVLFSLTSALGQTFIFMTVVYFGPLTCSIITTTRKFFTILASVILFSNPISSIQWVGTLLVFLGLGLDATYGKGSKKPSH.

Transmembrane regions (helical) follow at residues 9 to 29 (GLRL…YGIL), 49 to 69 (FALS…KLLI), 81 to 103 (QSWL…NSAL), 134 to 154 (YPLT…LFMY), 166 to 186 (TVGY…LTGV), 202 to 222 (MMLS…VLTG), 241 to 261 (IVLF…TVVY), and 283 to 303 (VILF…LVFL). The short motif at 316-320 (KKPSH) is the Di-lysine motif element.

This sequence belongs to the nucleotide-sugar transporter family. SLC35B subfamily.

The protein resides in the endoplasmic reticulum membrane. Probable sugar transporter. In Xenopus laevis (African clawed frog), this protein is Solute carrier family 35 member B1 (slc35b1).